A 182-amino-acid chain; its full sequence is MRYSQIAAKYARALLNVAVELEKTEEYGDILAVVVQLYQKAKQFFDDPTIGAAEHVDRITKFINQIGAHFDKPFWNFLKIVFEKRRQSVLPAILQYYKNMKIESEMKVPVFLTTAYELSEEELKVITDFVRKYTKRNPVFETRIDESLIAGVVIECEGKTFDASVAGRIRNVTRHVLQREVM.

Belongs to the ATPase delta chain family. In terms of assembly, F-type ATPases have 2 components, F(1) - the catalytic core - and F(0) - the membrane proton channel. F(1) has five subunits: alpha(3), beta(3), gamma(1), delta(1), epsilon(1). F(0) has three main subunits: a(1), b(2) and c(10-14). The alpha and beta chains form an alternating ring which encloses part of the gamma chain. F(1) is attached to F(0) by a central stalk formed by the gamma and epsilon chains, while a peripheral stalk is formed by the delta and b chains.

The protein localises to the cell inner membrane. Functionally, f(1)F(0) ATP synthase produces ATP from ADP in the presence of a proton or sodium gradient. F-type ATPases consist of two structural domains, F(1) containing the extramembraneous catalytic core and F(0) containing the membrane proton channel, linked together by a central stalk and a peripheral stalk. During catalysis, ATP synthesis in the catalytic domain of F(1) is coupled via a rotary mechanism of the central stalk subunits to proton translocation. Its function is as follows. This protein is part of the stalk that links CF(0) to CF(1). It either transmits conformational changes from CF(0) to CF(1) or is implicated in proton conduction. This Pseudothermotoga lettingae (strain ATCC BAA-301 / DSM 14385 / NBRC 107922 / TMO) (Thermotoga lettingae) protein is ATP synthase subunit delta.